The sequence spans 212 residues: Thymidylate kinase (212 aa).

G10–T17 contacts ATP.

Belongs to the thymidylate kinase family.

It carries out the reaction dTMP + ATP = dTDP + ADP. In terms of biological role, phosphorylation of dTMP to form dTDP in both de novo and salvage pathways of dTTP synthesis. In Lactobacillus delbrueckii subsp. bulgaricus (strain ATCC 11842 / DSM 20081 / BCRC 10696 / JCM 1002 / NBRC 13953 / NCIMB 11778 / NCTC 12712 / WDCM 00102 / Lb 14), this protein is Thymidylate kinase.